Reading from the N-terminus, the 357-residue chain is Protein phosphatase 1 regulatory subunit 42 (357 aa).

7 LRR repeats span residues 29–50 (KITH…SLCR), 51–72 (NLSV…NYTT), 73–94 (NLTH…SSLK), 95–116 (KLEK…EGLE), 117–138 (ELRE…LFDP), 147–168 (SLST…EILE), and 169–190 (NLNH…ELLL). An LRRCT domain is found at 204 to 242 (NPVCLKPKYRDKLILTSKSLEFLDGKEIKDMERQFLMNW). Residues 329-357 (ESSLTKNDIHEPHLLQNPKVKENLSEKKE) form a disordered region. The span at 335-357 (NDIHEPHLLQNPKVKENLSEKKE) shows a compositional bias: basic and acidic residues.

In terms of assembly, interacts with PPP1CC isoform gamma-2; the interaction is direct. Interacts with actin, dynein, KIF5B, KIFC1 and tubulin. Associates with microtubules. Phosphorylated; during the first round of spermatogenesis with a marginal increase at 21 days after birth. In terms of tissue distribution, testis-specific. Expressed in spermatids (at protein level). Testis-specific.

It is found in the cytoplasm. The protein resides in the cytoskeleton. The protein localises to the microtubule organizing center. It localises to the centrosome. Regulates phosphatase activity of protein phosphatase 1 (PP1) complexes in the testis. This is Protein phosphatase 1 regulatory subunit 42 (Ppp1r42) from Mus musculus (Mouse).